The sequence spans 207 residues: ATP phosphoribosyltransferase (207 aa).

Belongs to the ATP phosphoribosyltransferase family. Short subfamily. As to quaternary structure, heteromultimer composed of HisG and HisZ subunits.

The protein localises to the cytoplasm. It carries out the reaction 1-(5-phospho-beta-D-ribosyl)-ATP + diphosphate = 5-phospho-alpha-D-ribose 1-diphosphate + ATP. Its pathway is amino-acid biosynthesis; L-histidine biosynthesis; L-histidine from 5-phospho-alpha-D-ribose 1-diphosphate: step 1/9. In terms of biological role, catalyzes the condensation of ATP and 5-phosphoribose 1-diphosphate to form N'-(5'-phosphoribosyl)-ATP (PR-ATP). Has a crucial role in the pathway because the rate of histidine biosynthesis seems to be controlled primarily by regulation of HisG enzymatic activity. This Dictyoglomus thermophilum (strain ATCC 35947 / DSM 3960 / H-6-12) protein is ATP phosphoribosyltransferase.